The primary structure comprises 170 residues: MALLNVLIYPDERLKTVAEPVSVFDEELQTFIDNMFETMYHEEGIGLAATQVNVHKRIITIDIEGTKENQIVLINPKILESFGETGIEEGCLSLPGLRGFVPRKETVKVKAQNRQGEEFMLDADGLLAICIQHEIDHLNGIVFADHLSPLKRQRMKEKLLKLQKQIAKNR.

Positions 91 and 133 each coordinate Fe cation. The active site involves Glu-134. His-137 provides a ligand contact to Fe cation.

Belongs to the polypeptide deformylase family. It depends on Fe(2+) as a cofactor.

It carries out the reaction N-terminal N-formyl-L-methionyl-[peptide] + H2O = N-terminal L-methionyl-[peptide] + formate. Its function is as follows. Removes the formyl group from the N-terminal Met of newly synthesized proteins. Requires at least a dipeptide for an efficient rate of reaction. N-terminal L-methionine is a prerequisite for activity but the enzyme has broad specificity at other positions. This Histophilus somni (strain 2336) (Haemophilus somnus) protein is Peptide deformylase.